A 150-amino-acid polypeptide reads, in one-letter code: Azurin (150 aa).

The N-terminal stretch at 1–21 (MFKQVLGGMALMAAFSAPVLA) is a signal peptide. Positions 22 to 150 (AECSVDIAGT…LMKGTLKLVD (129 aa)) constitute a Plastocyanin-like domain. Residues cysteine 24 and cysteine 47 are joined by a disulfide bond. Residues histidine 67, cysteine 133, histidine 138, and methionine 142 each coordinate Cu cation.

The protein resides in the periplasm. The sequence is that of Azurin from Bordetella bronchiseptica (strain ATCC BAA-588 / NCTC 13252 / RB50) (Alcaligenes bronchisepticus).